A 352-amino-acid chain; its full sequence is Histidinol-phosphate aminotransferase (352 aa).

Lysine 211 carries the post-translational modification N6-(pyridoxal phosphate)lysine.

The protein belongs to the class-II pyridoxal-phosphate-dependent aminotransferase family. Histidinol-phosphate aminotransferase subfamily. As to quaternary structure, homodimer. Requires pyridoxal 5'-phosphate as cofactor.

The catalysed reaction is L-histidinol phosphate + 2-oxoglutarate = 3-(imidazol-4-yl)-2-oxopropyl phosphate + L-glutamate. It functions in the pathway amino-acid biosynthesis; L-histidine biosynthesis; L-histidine from 5-phospho-alpha-D-ribose 1-diphosphate: step 7/9. The chain is Histidinol-phosphate aminotransferase from Haemophilus influenzae (strain PittGG).